The sequence spans 620 residues: Ran-binding protein 10 (620 aa).

The interval 1–34 (MAAATADPGAGSPQVGDSSGGATGCGLPSPGEQE) is disordered. A2 carries the post-translational modification N-acetylalanine. The B30.2/SPRY domain occupies 35–222 (LSRRLQRLYP…VDANFGQQPF (188 aa)). The 33-residue stretch at 253–285 (WQAVLQNMVSSYLVHHGYCATATAFARMTETPI) folds into the LisH domain. The 58-residue stretch at 291-348 (SIKNRQKIQKLVLEGRVGEAIETTQRFYPGLLEHNPNLLFMLKCRQFVEMVNGTDSEV) folds into the CTLH domain. A compositionally biased stretch (polar residues) spans 347 to 398 (EVRSLSSRSPKSQDSYPGSPSLSPRHGPTSSHTHNTGADSPSCSNGVASTKS). The disordered stretch occupies residues 347-459 (EVRSLSSRSP…TSDSEMEMEA (113 aa)). Phosphoserine is present on S361. Y362 bears the Phosphotyrosine mark. S365, S367, S369, and S422 each carry phosphoserine. The span at 409 to 436 (SSSSSSSSSSSSSSPSSVNYSESNSTDS) shows a compositional bias: low complexity. Residues 437–450 (TKSQPHSSTSNQET) are compositionally biased toward polar residues. Phosphoserine occurs at positions 451 and 453.

Belongs to the RANBP9/10 family. As to quaternary structure, may form homodimers. Identified in the CTLH complex that contains GID4, RANBP9 and/or RANBP10, MKLN1, MAEA, RMND5A (or alternatively its paralog RMND5B), GID8, ARMC8, WDR26 and YPEL5. Within this complex, MAEA, RMND5A (or alternatively its paralog RMND5B), GID8, WDR26, and RANBP9 and/or RANBP10 form the catalytic core, while GID4, MKLN1, ARMC8 and YPEL5 have ancillary roles. Interacts with RAN and RANBP9. Interacts with the HGF receptor MET. Interacts with AR. Interacts with TUBB1. Interacts with YPEL5. May interact with TUBB5. Interacts with DDX4.

It is found in the cytoplasm. It localises to the cytosol. The protein resides in the nucleus. May act as an adapter protein to couple membrane receptors to intracellular signaling pathways. Core component of the CTLH E3 ubiquitin-protein ligase complex that selectively accepts ubiquitin from UBE2H and mediates ubiquitination and subsequent proteasomal degradation of the transcription factor HBP1. Enhances dihydrotestosterone-induced transactivation activity of AR, as well as dexamethasone-induced transactivation activity of NR3C1, but does not affect estrogen-induced transactivation. Acts as a guanine nucleotide exchange factor (GEF) for RAN GTPase. May play an essential role in hemostasis and in maintaining microtubule dynamics with respect to both platelet shape and function. The protein is Ran-binding protein 10 (RANBP10) of Bos taurus (Bovine).